The primary structure comprises 1647 residues: Probable ubiquitin fusion degradation protein C12B10.01c (1647 aa).

Positions 192–209 are enriched in polar residues; the sequence is TYSDSSNYHTSTDSSQYN. Disordered stretches follow at residues 192 to 288 and 1039 to 1076; these read TYSD…PSAA and ESMS…SSTS. 2 stretches are compositionally biased toward acidic residues: residues 218–228 and 245–273; these read DTNDGTDDDIN and ERDE…ENEN. The span at 1039-1050 shows a compositional bias: low complexity; sequence ESMSGSSRNSSG. Residues 1051–1065 are compositionally biased toward polar residues; it reads DYTDSMSQDAPNHTT. The span at 1066–1076 shows a compositional bias: basic and acidic residues; sequence EPSERRDSSTS. Residues 1183 to 1257 form a K-box region; that stretch reads IENILTDFSN…SVSFLLSRNP (75 aa). The 354-residue stretch at 1294–1647 folds into the HECT domain; that stretch reads ATYAASENIL…LEGQGSFHLS (354 aa). Catalysis depends on Cys1614, which acts as the Glycyl thioester intermediate.

This sequence belongs to the UPL family. K-HECT subfamily.

It carries out the reaction S-ubiquitinyl-[E2 ubiquitin-conjugating enzyme]-L-cysteine + [acceptor protein]-L-lysine = [E2 ubiquitin-conjugating enzyme]-L-cysteine + N(6)-ubiquitinyl-[acceptor protein]-L-lysine.. Functionally, E3 ubiquitin-protein ligase which accepts ubiquitin from an E2 ubiquitin-conjugating enzyme in the form of a thioester and then directly transfers the ubiquitin to targeted substrates. In Schizosaccharomyces pombe (strain 972 / ATCC 24843) (Fission yeast), this protein is Probable ubiquitin fusion degradation protein C12B10.01c.